The following is a 437-amino-acid chain: tRNA-2-methylthio-N(6)-dimethylallyladenosine synthase (437 aa).

In terms of domain architecture, MTTase N-terminal spans 1-115; the sequence is MKVYIETMGC…ISQVIHKEKA (115 aa). Cys10, Cys46, Cys78, Cys148, Cys152, and Cys155 together coordinate [4Fe-4S] cluster. The region spanning 134-367 is the Radical SAM core domain; it reads KKAQIRSLLN…QNRHKEILEE (234 aa). One can recognise a TRAM domain in the interval 370–436; sequence KLEVGKTHVV…KGRLIAAIKG (67 aa).

This sequence belongs to the methylthiotransferase family. MiaB subfamily. In terms of assembly, monomer. The cofactor is [4Fe-4S] cluster.

Its subcellular location is the cytoplasm. It carries out the reaction N(6)-dimethylallyladenosine(37) in tRNA + (sulfur carrier)-SH + AH2 + 2 S-adenosyl-L-methionine = 2-methylsulfanyl-N(6)-dimethylallyladenosine(37) in tRNA + (sulfur carrier)-H + 5'-deoxyadenosine + L-methionine + A + S-adenosyl-L-homocysteine + 2 H(+). Its function is as follows. Catalyzes the methylthiolation of N6-(dimethylallyl)adenosine (i(6)A), leading to the formation of 2-methylthio-N6-(dimethylallyl)adenosine (ms(2)i(6)A) at position 37 in tRNAs that read codons beginning with uridine. The chain is tRNA-2-methylthio-N(6)-dimethylallyladenosine synthase from Helicobacter pylori (strain HPAG1).